A 271-amino-acid chain; its full sequence is Metal-staphylopine import system ATP-binding protein CntD (271 aa).

The 246-residue stretch at 6 to 251 (VKHLTITDTW…PEHVYTKYLL (246 aa)) folds into the ABC transporter domain. 38-45 (GESGSGKS) is a binding site for ATP.

It belongs to the ABC transporter superfamily. In terms of assembly, the complex is composed of two ATP-binding proteins (CntD and CntF), two transmembrane proteins (CntB and CntC) and a solute-binding protein (CntA).

The protein localises to the cell membrane. Part of the ABC transporter complex CntABCDF (Opp1) involved in the uptake of metal in complex with the metallophore staphylopine (StP). May be involved in the import of a large array of divalent metals ions such as nickel, cobalt, zinc, copper and iron. Probably responsible for energy coupling to the transport system. The sequence is that of Metal-staphylopine import system ATP-binding protein CntD from Staphylococcus aureus (strain Mu50 / ATCC 700699).